The chain runs to 260 residues: Phosphate import ATP-binding protein PstB (260 aa).

The 242-residue stretch at 14–255 (IETENLSLFY…PKNTKTEEYI (242 aa)) folds into the ABC transporter domain. Residue 46–53 (GPSGCGKS) coordinates ATP.

It belongs to the ABC transporter superfamily. Phosphate importer (TC 3.A.1.7) family. As to quaternary structure, the complex is composed of two ATP-binding proteins (PstB), two transmembrane proteins (PstC and PstA) and a solute-binding protein (PstS).

The protein resides in the cell inner membrane. It carries out the reaction phosphate(out) + ATP + H2O = ADP + 2 phosphate(in) + H(+). In terms of biological role, part of the ABC transporter complex PstSACB involved in phosphate import. Responsible for energy coupling to the transport system. This Borrelia garinii subsp. bavariensis (strain ATCC BAA-2496 / DSM 23469 / PBi) (Borreliella bavariensis) protein is Phosphate import ATP-binding protein PstB.